The chain runs to 201 residues: MMSSRVSAPAPGALGPPLRRRFFARSVHEVAPELIGATLLVEGVGGVIVEVEAYHHTDPAAHSYGGQTARNAVMFGPPGFAYVYRSYGIHWCVNVVCEAEGSASAVLIRALQPTHGVEAMRARRGLDDARSLCSGPGKLAQALGISIAHNGLPLDAPPFAIHRRIGEPDIVTGPRIGITKAADYPWRFGLKGSRFVSVPFK.

This sequence belongs to the DNA glycosylase MPG family.

This Rhodopseudomonas palustris (strain HaA2) protein is Putative 3-methyladenine DNA glycosylase.